A 408-amino-acid chain; its full sequence is ATP phosphoribosyltransferase regulatory subunit (408 aa).

The protein belongs to the class-II aminoacyl-tRNA synthetase family. HisZ subfamily. As to quaternary structure, heteromultimer composed of HisG and HisZ subunits.

Its subcellular location is the cytoplasm. The protein operates within amino-acid biosynthesis; L-histidine biosynthesis; L-histidine from 5-phospho-alpha-D-ribose 1-diphosphate: step 1/9. Required for the first step of histidine biosynthesis. May allow the feedback regulation of ATP phosphoribosyltransferase activity by histidine. The polypeptide is ATP phosphoribosyltransferase regulatory subunit (Thermosynechococcus vestitus (strain NIES-2133 / IAM M-273 / BP-1)).